A 1146-amino-acid polypeptide reads, in one-letter code: Myosin heavy chain kinase A (1146 aa).

Residues 1 to 25 are disordered; it reads MFNIKKRKESITGIPPINVNSPQSV. Residues 100–120 adopt a coiled-coil conformation; sequence EQMEDQLEKTMKVVRNHTDSL. The interval 158–191 is disordered; it reads IQEKKSTSSPLVKGGISGGGGSGGDDSFDGANIS. Residues 172–181 show a composition bias toward gly residues; it reads GISGGGGSGG. Coiled coils occupy residues 187–241 and 297–502; these read GANI…KRIE and SKIE…ASIS. A pseudosubstrate/autoinhibitory domain region spans residues 500–551; the sequence is SISPISSVPKSPITTKRSSIILNSPPMTSQQSSPKIQDLLSSSGSSSVSGIN. Over residues 521-534 the composition is skewed to polar residues; sequence LNSPPMTSQQSSPK. Residues 521 to 540 form a disordered region; the sequence is LNSPPMTSQQSSPKIQDLLS. The segment at 552–852 is catalytic; it reads ISSETGEMGI…KVGAKQLPKA (301 aa). An Alpha-type protein kinase domain is found at 564-808; the sequence is EFDPIINKWI…VCALLDLDVK (245 aa). Residue 778 to 783 coordinates ATP; the sequence is GLGNLG. 7 WD repeats span residues 867–897, 910–938, 952–980, 993–1021, 1033–1061, 1073–1101, and 1114–1142; these read SFRE…RVFD, GHRK…KVHI, GHTG…KVWD, VHTK…YVWD, GHED…KIWD, GHWN…KVWD, and SHSL…KVWE.

This sequence belongs to the protein kinase superfamily. Alpha-type protein kinase family. ALPK subfamily. In terms of assembly, oligomer. The cofactor is Mg(2+). Mn(2+) serves as cofactor. In terms of processing, the N-terminus is blocked.

It catalyses the reaction L-threonyl-[myosin heavy-chain] + ATP = O-phospho-L-threonyl-[myosin heavy-chain] + ADP + H(+). Its function is as follows. Catalyzes its autophosphorylation, which is needed for enzymatic activity and phosphorylates myosin II heavy chain at a threonine in the C-terminal tail region. This phosphorylation is critical for regulating the assembly and disassembly of myosin II filament, affecting myosin localization during an array of cellular contractile events, including cytokinesis and capping of cell surface receptors as well as chemotactic cell locomotion. The protein is Myosin heavy chain kinase A (mhkA) of Dictyostelium discoideum (Social amoeba).